We begin with the raw amino-acid sequence, 710 residues long: Polyribonucleotide nucleotidyltransferase (710 aa).

Positions 491 and 497 each coordinate Mg(2+). Positions 558–618 (PRIYKIQVKP…SAAQKAIEII (61 aa)) constitute a KH domain. One can recognise an S1 motif domain in the interval 628-696 (GRIYMGKVTR…ELGRVRLSRK (69 aa)).

The protein belongs to the polyribonucleotide nucleotidyltransferase family. Mg(2+) serves as cofactor.

The protein resides in the cytoplasm. It carries out the reaction RNA(n+1) + phosphate = RNA(n) + a ribonucleoside 5'-diphosphate. Involved in mRNA degradation. Catalyzes the phosphorolysis of single-stranded polyribonucleotides processively in the 3'- to 5'-direction. This is Polyribonucleotide nucleotidyltransferase from Thermodesulfovibrio yellowstonii (strain ATCC 51303 / DSM 11347 / YP87).